The sequence spans 207 residues: Crossover junction endodeoxyribonuclease RuvC (207 aa).

Active-site residues include aspartate 11, glutamate 71, and aspartate 143. Aspartate 11, glutamate 71, and aspartate 143 together coordinate Mg(2+).

It belongs to the RuvC family. Homodimer which binds Holliday junction (HJ) DNA. The HJ becomes 2-fold symmetrical on binding to RuvC with unstacked arms; it has a different conformation from HJ DNA in complex with RuvA. In the full resolvosome a probable DNA-RuvA(4)-RuvB(12)-RuvC(2) complex forms which resolves the HJ. Mg(2+) serves as cofactor.

It is found in the cytoplasm. The catalysed reaction is Endonucleolytic cleavage at a junction such as a reciprocal single-stranded crossover between two homologous DNA duplexes (Holliday junction).. Its function is as follows. The RuvA-RuvB-RuvC complex processes Holliday junction (HJ) DNA during genetic recombination and DNA repair. Endonuclease that resolves HJ intermediates. Cleaves cruciform DNA by making single-stranded nicks across the HJ at symmetrical positions within the homologous arms, yielding a 5'-phosphate and a 3'-hydroxyl group; requires a central core of homology in the junction. The consensus cleavage sequence is 5'-(A/T)TT(C/G)-3'. Cleavage occurs on the 3'-side of the TT dinucleotide at the point of strand exchange. HJ branch migration catalyzed by RuvA-RuvB allows RuvC to scan DNA until it finds its consensus sequence, where it cleaves and resolves the cruciform DNA. The chain is Crossover junction endodeoxyribonuclease RuvC from Methylobacterium radiotolerans (strain ATCC 27329 / DSM 1819 / JCM 2831 / NBRC 15690 / NCIMB 10815 / 0-1).